The following is a 356-amino-acid chain: NADH-quinone oxidoreductase subunit H (356 aa).

Helical transmembrane passes span 22–42, 59–79, 93–113, 124–144, 171–191, 198–218, 240–260, 285–305, and 321–341; these read GVVS…TAYL, PSLA…KLVF, FIIA…VIPI, IGGI…IIIA, MALS…IQIV, PIWL…SILA, VEYS…NMIL, IPGY…FLWI, and GLKV…TILV.

This sequence belongs to the complex I subunit 1 family. NDH-1 is composed of 14 different subunits. Subunits NuoA, H, J, K, L, M, N constitute the membrane sector of the complex.

The protein resides in the cell inner membrane. It catalyses the reaction a quinone + NADH + 5 H(+)(in) = a quinol + NAD(+) + 4 H(+)(out). Its function is as follows. NDH-1 shuttles electrons from NADH, via FMN and iron-sulfur (Fe-S) centers, to quinones in the respiratory chain. The immediate electron acceptor for the enzyme in this species is believed to be ubiquinone. Couples the redox reaction to proton translocation (for every two electrons transferred, four hydrogen ions are translocated across the cytoplasmic membrane), and thus conserves the redox energy in a proton gradient. This subunit may bind ubiquinone. This Orientia tsutsugamushi (strain Boryong) (Rickettsia tsutsugamushi) protein is NADH-quinone oxidoreductase subunit H.